A 467-amino-acid polypeptide reads, in one-letter code: 3-isopropylmalate dehydratase large subunit (467 aa).

Positions 347, 407, and 410 each coordinate [4Fe-4S] cluster.

This sequence belongs to the aconitase/IPM isomerase family. LeuC type 1 subfamily. Heterodimer of LeuC and LeuD. [4Fe-4S] cluster serves as cofactor.

It catalyses the reaction (2R,3S)-3-isopropylmalate = (2S)-2-isopropylmalate. It participates in amino-acid biosynthesis; L-leucine biosynthesis; L-leucine from 3-methyl-2-oxobutanoate: step 2/4. Catalyzes the isomerization between 2-isopropylmalate and 3-isopropylmalate, via the formation of 2-isopropylmaleate. The sequence is that of 3-isopropylmalate dehydratase large subunit from Crocosphaera subtropica (strain ATCC 51142 / BH68) (Cyanothece sp. (strain ATCC 51142)).